The primary structure comprises 141 residues: Large ribosomal subunit protein uL11 (141 aa).

This sequence belongs to the universal ribosomal protein uL11 family. In terms of assembly, part of the ribosomal stalk of the 50S ribosomal subunit. Interacts with L10 and the large rRNA to form the base of the stalk. L10 forms an elongated spine to which L12 dimers bind in a sequential fashion forming a multimeric L10(L12)X complex. In terms of processing, one or more lysine residues are methylated.

Functionally, forms part of the ribosomal stalk which helps the ribosome interact with GTP-bound translation factors. In Geobacillus kaustophilus (strain HTA426), this protein is Large ribosomal subunit protein uL11.